An 890-amino-acid chain; its full sequence is Translation initiation factor IF-2 (890 aa).

The interval 45-304 (LIDHLNQKNS…LQQGFQKPAQ (260 aa)) is disordered. The span at 67-81 (STLNIPGTGGKSKSV) shows a compositional bias: polar residues. A compositionally biased stretch (basic and acidic residues) spans 92 to 217 (VKRDPQEAER…RMAEENKWTD (126 aa)). The span at 252-266 (GRGRNAKAARPKKGN) shows a compositional bias: basic residues. Residues 267–280 (KHAESKADREEARA) show a composition bias toward basic and acidic residues. The tr-type G domain occupies 389-558 (PRAPVVTIMG…LLQAEVLELK (170 aa)). The G1 stretch occupies residues 398–405 (GHVDHGKT). Position 398–405 (398–405 (GHVDHGKT)) interacts with GTP. Residues 423 to 427 (GITQH) form a G2 region. The G3 stretch occupies residues 444-447 (DTPG). Residues 444 to 448 (DTPGH) and 498 to 501 (NKID) each bind GTP. A G4 region spans residues 498-501 (NKID). A G5 region spans residues 534–536 (SAK). Lys-808 carries the post-translational modification N6-acetyllysine.

This sequence belongs to the TRAFAC class translation factor GTPase superfamily. Classic translation factor GTPase family. IF-2 subfamily.

The protein localises to the cytoplasm. One of the essential components for the initiation of protein synthesis. Protects formylmethionyl-tRNA from spontaneous hydrolysis and promotes its binding to the 30S ribosomal subunits. Also involved in the hydrolysis of GTP during the formation of the 70S ribosomal complex. The chain is Translation initiation factor IF-2 from Shigella sonnei (strain Ss046).